The sequence spans 327 residues: Aspartate--ammonia ligase (327 aa).

Belongs to the class-II aminoacyl-tRNA synthetase family. AsnA subfamily.

It localises to the cytoplasm. The enzyme catalyses L-aspartate + NH4(+) + ATP = L-asparagine + AMP + diphosphate + H(+). It participates in amino-acid biosynthesis; L-asparagine biosynthesis; L-asparagine from L-aspartate (ammonia route): step 1/1. This chain is Aspartate--ammonia ligase, found in Fusobacterium nucleatum subsp. nucleatum (strain ATCC 25586 / DSM 15643 / BCRC 10681 / CIP 101130 / JCM 8532 / KCTC 2640 / LMG 13131 / VPI 4355).